Reading from the N-terminus, the 619-residue chain is Genetic interactor of prohibitins 3, mitochondrial (619 aa).

A mitochondrion-targeting transit peptide spans 1–55 (MLKAQIQTGLQLLQRAAVSHMRPSSCTSMLMRMRVHLAPRALQSQRSLSSSEFSP). In terms of domain architecture, CP-type G spans 162–372 (VAAVSDVMHS…IYDVPGFSSA (211 aa)).

Belongs to the TRAFAC class YlqF/YawG GTPase family. GEP3 subfamily.

The protein resides in the mitochondrion. Its function is as follows. May be involved in the mitochondrial lipid metabolism. The protein is Genetic interactor of prohibitins 3, mitochondrial (GEP3) of Clavispora lusitaniae (strain ATCC 42720) (Yeast).